Here is a 343-residue protein sequence, read N- to C-terminus: Mitochondrial import inner membrane translocase subunit TIM50-A (343 aa).

The Mitochondrial matrix portion of the chain corresponds to Met1–Asn57. The helical transmembrane segment at Phe58–Tyr77 threads the bilayer. At Lys78–Lys343 the chain is on the mitochondrial intermembrane side. An FCP1 homology domain is found at Tyr135–Ile278.

It belongs to the TIM50 family. In terms of assembly, component of the TIM23 complex at least composed of Tim23, Tim17 (Tim17a1, Tim17a2 or Tim17b1) and a Tim50. In terms of tissue distribution, exclusively expressed in the testis.

Its subcellular location is the mitochondrion inner membrane. Its function is as follows. Essential component of the TIM23 complex, a complex that mediates the translocation of transit peptide-containing proteins across the mitochondrial inner membrane. The chain is Mitochondrial import inner membrane translocase subunit TIM50-A (ttm3) from Drosophila melanogaster (Fruit fly).